A 535-amino-acid polypeptide reads, in one-letter code: EH domain-containing protein 3 (535 aa).

An N-acetylmethionine modification is found at Met-1. The Dynamin-type G domain occupies 55–286; that stretch reads FDNKPMVLLV…DLFKDIQSLP (232 aa). The tract at residues 65–72 is G1 motif; the sequence is GQYSTGKT. 65 to 72 serves as a coordination point for ATP; sequence GQYSTGKT. The segment at 91–92 is G2 motif; sequence EP. The G3 motif stretch occupies residues 153–156; sequence DTPG. Positions 198-227 form a coiled coil; sequence DEFSEVIKALKNHEDKMRVVLNKADQIETQ. Residues 219 to 222 are G4 motif; sequence NKAD. ATP is bound at residue Lys-220. Residue Ile-243 is a region of interest, G5 motif. Trp-258 lines the ATP pocket. A Glycyl lysine isopeptide (Lys-Gly) (interchain with G-Cter in SUMO) cross-link involves residue Lys-315. Residues Ser-349 and Ser-456 each carry the phosphoserine modification. The EH domain maps to 444-532; that stretch reads DKPMYDEIFY…AHLLPPSKRK (89 aa). An EF-hand domain is found at 476-511; that stretch reads LPNSVLGKIWKLADIDKDGMLDDEEFALANHLIKVK. The Ca(2+) site is built by Asp-489, Asp-491, Asp-493, Met-495, and Glu-500. Lys-511 participates in a covalent cross-link: Glycyl lysine isopeptide (Lys-Gly) (interchain with G-Cter in SUMO).

The protein belongs to the TRAFAC class dynamin-like GTPase superfamily. Dynamin/Fzo/YdjA family. EHD subfamily. In terms of assembly, homooligomer, and heterooligomer with EHD1, EHD2 and EHD4, ATP-binding is required for heterooligomerization. Interacts with PACSIN1. Interacts with PACSIN2. Interacts (via EH domain) with MICALL1. Interacts (via EH domain) with RAB11FIP2. Interacts with ANK2. Interacts with CACNA1GG and CACNA1H.

It is found in the recycling endosome membrane. The protein localises to the cell membrane. The protein resides in the cell projection. It localises to the cilium membrane. In terms of biological role, ATP- and membrane-binding protein that controls membrane reorganization/tubulation upon ATP hydrolysis. In vitro causes tubulation of endocytic membranes. Binding to phosphatidic acid induces its membrane tubulation activity. Plays a role in endocytic transport. Involved in early endosome to recycling endosome compartment (ERC), retrograde early endosome to Golgi, and endosome to plasma membrane (rapid recycling) protein transport. Involved in the regulation of Golgi maintenance and morphology. Involved in the recycling of internalized D1 dopamine receptor. Plays a role in cardiac protein trafficking probably implicating ANK2. Involved in the ventricular membrane targeting of SLC8A1 and CACNA1C and probably the atrial membrane localization of CACNA1GG and CACNA1H implicated in the regulation of atrial myocyte excitability and cardiac conduction. In conjunction with EHD4 may be involved in endocytic trafficking of KDR/VEGFR2 implicated in control of glomerular function. Involved in the rapid recycling of integrin beta-3 implicated in cell adhesion maintenance. Involved in the unidirectional retrograde dendritic transport of endocytosed BACE1 and in efficient sorting of BACE1 to axons implicating a function in neuronal APP processing. Plays a role in the formation of the ciliary vesicle, an early step in cilium biogenesis; possibly sharing redundant functions with Ehd1. The protein is EH domain-containing protein 3 of Rattus norvegicus (Rat).